Consider the following 336-residue polypeptide: Probable tRNA pseudouridine synthase B (336 aa).

The active-site Nucleophile is aspartate 81. One can recognise a PUA domain in the interval 248–323 (LKKVVVKDSA…VAVDVERVYM (76 aa)).

The protein belongs to the pseudouridine synthase TruB family. Type 2 subfamily.

The catalysed reaction is uridine(55) in tRNA = pseudouridine(55) in tRNA. Could be responsible for synthesis of pseudouridine from uracil-55 in the psi GC loop of transfer RNAs. This chain is Probable tRNA pseudouridine synthase B, found in Methanocaldococcus jannaschii (strain ATCC 43067 / DSM 2661 / JAL-1 / JCM 10045 / NBRC 100440) (Methanococcus jannaschii).